A 561-amino-acid polypeptide reads, in one-letter code: Formate--tetrahydrofolate ligase (561 aa).

Position 66 to 73 (66 to 73 (TPAGEGKT)) interacts with ATP.

Belongs to the formate--tetrahydrofolate ligase family.

The enzyme catalyses (6S)-5,6,7,8-tetrahydrofolate + formate + ATP = (6R)-10-formyltetrahydrofolate + ADP + phosphate. It participates in one-carbon metabolism; tetrahydrofolate interconversion. This chain is Formate--tetrahydrofolate ligase, found in Methylibium petroleiphilum (strain ATCC BAA-1232 / LMG 22953 / PM1).